The sequence spans 344 residues: Anthranilate phosphoribosyltransferase (344 aa).

5-phospho-alpha-D-ribose 1-diphosphate-binding positions include Gly86, 89–90 (GD), Thr94, 96–99 (NIST), 114–122 (KHGNKSASG), and Ser126. Position 86 (Gly86) interacts with anthranilate. Ser98 is a binding site for Mg(2+). Anthranilate is bound at residue Asn117. Anthranilate is bound at residue Arg172. The Mg(2+) site is built by Asp231 and Glu232.

The protein belongs to the anthranilate phosphoribosyltransferase family. Homodimer. Mg(2+) serves as cofactor.

It carries out the reaction N-(5-phospho-beta-D-ribosyl)anthranilate + diphosphate = 5-phospho-alpha-D-ribose 1-diphosphate + anthranilate. The protein operates within amino-acid biosynthesis; L-tryptophan biosynthesis; L-tryptophan from chorismate: step 2/5. In terms of biological role, catalyzes the transfer of the phosphoribosyl group of 5-phosphorylribose-1-pyrophosphate (PRPP) to anthranilate to yield N-(5'-phosphoribosyl)-anthranilate (PRA). The polypeptide is Anthranilate phosphoribosyltransferase (Prochlorococcus marinus (strain MIT 9215)).